The following is a 126-amino-acid chain: Histone H2B type 1-K (126 aa).

The segment covering Met1–Lys12 has biased composition (low complexity). The segment at Met1–Glu36 is disordered. Pro2 is subject to N-acetylproline. An ADP-ribosyl glutamic acid modification is found at Glu3. N6-(2-hydroxyisobutyryl)lysine; alternate is present on Lys6. The residue at position 6 (Lys6) is an N6-(beta-hydroxybutyryl)lysine; alternate. An N6-acetyllysine; alternate modification is found at Lys6. Lys6 carries the N6-butyryllysine; alternate modification. Lys6 carries the post-translational modification N6-crotonyllysine; alternate. Residue Lys6 is modified to N6-lactoyllysine; alternate. Residue Lys6 forms a Glycyl lysine isopeptide (Lys-Gly) (interchain with G-Cter in SUMO2); alternate linkage. The residue at position 7 (Ser7) is an ADP-ribosylserine. Lys12 carries the N6-(beta-hydroxybutyryl)lysine; alternate modification. Lys12 and Lys13 each carry N6-acetyllysine; alternate. Residues Lys12 and Lys13 each carry the N6-crotonyllysine; alternate modification. Lys12 bears the N6-lactoyllysine; alternate mark. Lys13 is modified (N6-(2-hydroxyisobutyryl)lysine; alternate). Ser15 is modified (phosphoserine; by STK4/MST1). 4 positions are modified to N6-acetyllysine; alternate: Lys16, Lys17, Lys21, and Lys24. Lys16, Lys17, Lys21, Lys24, and Lys35 each carry N6-crotonyllysine; alternate. 4 positions are modified to N6-lactoyllysine; alternate: Lys16, Lys17, Lys21, and Lys24. Lys17 is modified (N6-glutaryllysine; alternate). An N6-(2-hydroxyisobutyryl)lysine; alternate mark is found at Lys21, Lys24, and Lys35. Lys21 carries the post-translational modification N6-(beta-hydroxybutyryl)lysine; alternate. Position 21 is an N6-butyryllysine; alternate (Lys21). A Glycyl lysine isopeptide (Lys-Gly) (interchain with G-Cter in SUMO2); alternate cross-link involves residue Lys21. N6-(beta-hydroxybutyryl)lysine; alternate is present on Lys35. Lys35 is modified (N6-glutaryllysine; alternate). At Lys35 the chain carries N6-succinyllysine; alternate. Lys35 is covalently cross-linked (Glycyl lysine isopeptide (Lys-Gly) (interchain with G-Cter in ubiquitin); alternate). The residue at position 36 (Glu36) is a PolyADP-ribosyl glutamic acid. Ser37 carries the phosphoserine; by AMPK modification. Residues Lys44, Lys47, and Lys58 each carry the N6-(2-hydroxyisobutyryl)lysine; alternate modification. Position 44 is an N6-lactoyllysine; alternate (Lys44). 2 positions are modified to N6-glutaryllysine; alternate: Lys44 and Lys47. Lys47 is subject to N6-methyllysine; alternate. Lys58 bears the N6,N6-dimethyllysine; alternate mark. Dimethylated arginine is present on Arg80. Lys86 bears the N6-(2-hydroxyisobutyryl)lysine; alternate mark. An N6-acetyllysine; alternate modification is found at Lys86. Lys86 is modified (N6-lactoyllysine; alternate). Lys86 carries the N6,N6,N6-trimethyllysine; alternate modification. 2 positions are modified to omega-N-methylarginine: Arg87 and Arg93. At Lys109 the chain carries N6-(2-hydroxyisobutyryl)lysine; alternate. The residue at position 109 (Lys109) is an N6-lactoyllysine; alternate. Lys109 carries the post-translational modification N6-glutaryllysine; alternate. Lys109 bears the N6-methyllysine; alternate mark. O-linked (GlcNAc) serine glycosylation occurs at Ser113. Position 116 is a phosphothreonine (Thr116). N6-(2-hydroxyisobutyryl)lysine; alternate occurs at positions 117 and 121. Position 117 is an N6-(beta-hydroxybutyryl)lysine; alternate (Lys117). N6-lactoyllysine; alternate occurs at positions 117 and 121. N6-glutaryllysine; alternate is present on residues Lys117 and Lys121. An N6-succinyllysine; alternate mark is found at Lys117 and Lys121. Lys117 carries the N6-methylated lysine; alternate modification. A Glycyl lysine isopeptide (Lys-Gly) (interchain with G-Cter in ubiquitin); alternate cross-link involves residue Lys121.

Belongs to the histone H2B family. In terms of assembly, the nucleosome is a histone octamer containing two molecules each of H2A, H2B, H3 and H4 assembled in one H3-H4 heterotetramer and two H2A-H2B heterodimers. The octamer wraps approximately 147 bp of DNA. In terms of processing, monoubiquitination at Lys-35 (H2BK34Ub) by the MSL1/MSL2 dimer is required for histone H3 'Lys-4' (H3K4me) and 'Lys-79' (H3K79me) methylation and transcription activation at specific gene loci, such as HOXA9 and MEIS1 loci. Similarly, monoubiquitination at Lys-121 (H2BK120Ub) by the RNF20/40 complex gives a specific tag for epigenetic transcriptional activation and is also prerequisite for histone H3 'Lys-4' and 'Lys-79' methylation. It also functions cooperatively with the FACT dimer to stimulate elongation by RNA polymerase II. H2BK120Ub also acts as a regulator of mRNA splicing: deubiquitination by USP49 is required for efficient cotranscriptional splicing of a large set of exons. Post-translationally, phosphorylated on Ser-15 (H2BS14ph) by STK4/MST1 during apoptosis; which facilitates apoptotic chromatin condensation. Also phosphorylated on Ser-15 in response to DNA double strand breaks (DSBs), and in correlation with somatic hypermutation and immunoglobulin class-switch recombination. Phosphorylation at Ser-37 (H2BS36ph) by AMPK in response to stress promotes transcription. GlcNAcylation at Ser-113 promotes monoubiquitination of Lys-121. It fluctuates in response to extracellular glucose, and associates with transcribed genes. In terms of processing, ADP-ribosylated by PARP1 or PARP2 on Ser-7 (H2BS6ADPr) in response to DNA damage. H2BS6ADPr promotes recruitment of CHD1L. Mono-ADP-ribosylated on Glu-3 (H2BE2ADPr) by PARP3 in response to single-strand breaks. Poly ADP-ribosylation on Glu-36 (H2BE35ADPr) by PARP1 regulates adipogenesis: it inhibits phosphorylation at Ser-37 (H2BS36ph), thereby blocking expression of pro-adipogenetic genes. Post-translationally, crotonylation (Kcr) is specifically present in male germ cells and marks testis-specific genes in post-meiotic cells, including X-linked genes that escape sex chromosome inactivation in haploid cells. Crotonylation marks active promoters and enhancers and confers resistance to transcriptional repressors. It is also associated with post-meiotically activated genes on autosomes. Lactylated in macrophages by EP300/P300 by using lactoyl-CoA directly derived from endogenous or exogenous lactate, leading to stimulates gene transcription.

It is found in the nucleus. It localises to the chromosome. In terms of biological role, core component of nucleosome. Nucleosomes wrap and compact DNA into chromatin, limiting DNA accessibility to the cellular machineries which require DNA as a template. Histones thereby play a central role in transcription regulation, DNA repair, DNA replication and chromosomal stability. DNA accessibility is regulated via a complex set of post-translational modifications of histones, also called histone code, and nucleosome remodeling. The protein is Histone H2B type 1-K of Bos taurus (Bovine).